The following is a 305-amino-acid chain: Aspartate carbamoyltransferase catalytic subunit (305 aa).

The carbamoyl phosphate site is built by R60 and T61. L-aspartate is bound at residue K88. Positions 110, 138, and 141 each coordinate carbamoyl phosphate. The L-aspartate site is built by R171 and R222. 2 residues coordinate carbamoyl phosphate: A263 and P264.

The protein belongs to the aspartate/ornithine carbamoyltransferase superfamily. ATCase family. In terms of assembly, heterododecamer (2C3:3R2) of six catalytic PyrB chains organized as two trimers (C3), and six regulatory PyrI chains organized as three dimers (R2).

The enzyme catalyses carbamoyl phosphate + L-aspartate = N-carbamoyl-L-aspartate + phosphate + H(+). It functions in the pathway pyrimidine metabolism; UMP biosynthesis via de novo pathway; (S)-dihydroorotate from bicarbonate: step 2/3. Its function is as follows. Catalyzes the condensation of carbamoyl phosphate and aspartate to form carbamoyl aspartate and inorganic phosphate, the committed step in the de novo pyrimidine nucleotide biosynthesis pathway. The polypeptide is Aspartate carbamoyltransferase catalytic subunit (Halalkalibacterium halodurans (strain ATCC BAA-125 / DSM 18197 / FERM 7344 / JCM 9153 / C-125) (Bacillus halodurans)).